A 554-amino-acid polypeptide reads, in one-letter code: Apyrase (554 aa).

Positions Met-1–Ser-21 are cleaved as a signal peptide. Residues Asp-43, His-45, Asp-92, Asn-124, His-224, and His-248 each coordinate a divalent metal cation. 6 residues coordinate AMP: Arg-358, Asn-394, Arg-399, Phe-418, Phe-504, and Asp-510.

This sequence belongs to the 5'-nucleotidase family. It depends on a divalent metal cation as a cofactor. Salivary gland (at protein level).

It is found in the secreted. The enzyme catalyses a ribonucleoside 5'-triphosphate + 2 H2O = a ribonucleoside 5'-phosphate + 2 phosphate + 2 H(+). Its function is as follows. Facilitates hematophagy by inhibiting ADP-dependent platelet aggregation in the host. Cleaves adenosine triphosphate (ATP) and adenosine diphosphate (ADP) to adenosine monophosphate (AMP) and inorganic phosphate. Shows potential for antithrombotic activity. Can induce basophil activation. May reduce probing time by facilitating the speed of locating blood. In Tabanus yao (Horsefly), this protein is Apyrase.